A 355-amino-acid chain; its full sequence is Uroporphyrinogen decarboxylase (355 aa).

Substrate contacts are provided by residues 27–31 (RQAGR), aspartate 77, tyrosine 154, threonine 209, and histidine 328.

The protein belongs to the uroporphyrinogen decarboxylase family. As to quaternary structure, homodimer.

The protein localises to the cytoplasm. The catalysed reaction is uroporphyrinogen III + 4 H(+) = coproporphyrinogen III + 4 CO2. The protein operates within porphyrin-containing compound metabolism; protoporphyrin-IX biosynthesis; coproporphyrinogen-III from 5-aminolevulinate: step 4/4. Its function is as follows. Catalyzes the decarboxylation of four acetate groups of uroporphyrinogen-III to yield coproporphyrinogen-III. This chain is Uroporphyrinogen decarboxylase, found in Colwellia psychrerythraea (strain 34H / ATCC BAA-681) (Vibrio psychroerythus).